The following is a 402-amino-acid chain: 26S proteasome regulatory subunit 8 (402 aa).

186-193 (GPPGTGKT) contacts ATP.

This sequence belongs to the AAA ATPase family.

It localises to the cytoplasm. It is found in the nucleus. Functionally, the 26S proteasome is involved in the ATP-dependent degradation of ubiquitinated proteins. The regulatory (or ATPase) complex confers ATP dependency and substrate specificity to the 26S complex. This Manduca sexta (Tobacco hawkmoth) protein is 26S proteasome regulatory subunit 8.